Reading from the N-terminus, the 288-residue chain is 4-diphosphocytidyl-2-C-methyl-D-erythritol kinase (288 aa).

The active site involves lysine 8. 92 to 102 (PVAAGMAGGST) contributes to the ATP binding site. Aspartate 134 is an active-site residue.

Belongs to the GHMP kinase family. IspE subfamily.

It catalyses the reaction 4-CDP-2-C-methyl-D-erythritol + ATP = 4-CDP-2-C-methyl-D-erythritol 2-phosphate + ADP + H(+). Its pathway is isoprenoid biosynthesis; isopentenyl diphosphate biosynthesis via DXP pathway; isopentenyl diphosphate from 1-deoxy-D-xylulose 5-phosphate: step 3/6. Functionally, catalyzes the phosphorylation of the position 2 hydroxy group of 4-diphosphocytidyl-2C-methyl-D-erythritol. This Clostridium perfringens (strain ATCC 13124 / DSM 756 / JCM 1290 / NCIMB 6125 / NCTC 8237 / Type A) protein is 4-diphosphocytidyl-2-C-methyl-D-erythritol kinase.